The primary structure comprises 122 residues: Large ribosomal subunit protein uL18 (122 aa).

Positions 1 to 21 (MSKLSRKQQTQKRHRRLRRHI) are enriched in basic residues. A disordered region spans residues 1–25 (MSKLSRKQQTQKRHRRLRRHITGTS).

The protein belongs to the universal ribosomal protein uL18 family. Part of the 50S ribosomal subunit; part of the 5S rRNA/L5/L18/L25 subcomplex. Contacts the 5S and 23S rRNAs.

This is one of the proteins that bind and probably mediate the attachment of the 5S RNA into the large ribosomal subunit, where it forms part of the central protuberance. This chain is Large ribosomal subunit protein uL18, found in Synechococcus sp. (strain CC9902).